Here is a 946-residue protein sequence, read N- to C-terminus: MAAHGKLRRERGLQAEYETQVKEMRWQLSEQLRCLELQGELRRELLQELAEFMRRRAEVELEYSRGLEKLAERFSSRGGRLGSSREHQSFRKEPSLLSPLHCWAVLLQHTRQQSRESAALSEVLAGPLAQRLSHIAEDVGRLVKKSRDLEQQLQDELLEVVSELQTAKKTYQAYHMESVNAEAKLREAERQEEKRAGRSVPTTTAGATEAGPLRKSSLKKGGRLVEKRQAKFMEHKLKCTKARNEYLLSLASVNAAVSNYYLHDVLDLMDCCDTGFHLALGQVLRSYTAAESRTQASQVQGLGSLEEAVEALDPPGDKAKVLEVHATVFCPPLRFDYHPHDGDEVAEICVEMELRDEILPRAQNIQSRLDRQTIETEEVNKTLKATLQALLEVVASDDGDVLDSFQTSPSTESLKSTSSDPGSRQAGRRRGQQQETETFYLTKLQEYLSGRSILAKLQAKHEKLQEALQRGDKEEQEVSWTQYTQRKFQKSRQPRPSSQYNQRLFGGDMEKFIQSSGQPVPLVVESCIRFINLNGLQHEGIFRVSGAQLRVSEIRDAFERGEDPLVEGCTAHDLDSVAGVLKLYFRSLEPPLFPPDLFGELLASSELEATAERVEHVSRLLWRLPAPVLVVLRYLFTFLNHLAQYSDENMMDPYNLAVCFGPTLLPVPAGQDPVALQGRVNQLVQTLIVQPDRVFPPLTSLPGPVYEKCMAPPSASCLGDAQLESLGADNEPELEAEMPAQEDDLEGVVEAVACFAYTGRTAQELSFRRGDVLRLHERASSDWWRGEHNGMRGLIPHKYITLPAGTEKQVVGAGLQTAGESGSSPEGLLASELVHRPEPCTSPEAMGPSGHRRRCLVPASPEQHVEVDKAVAQNMDSVFKELLGKTSVRQGLGPASTTSPSPGPRSPKAPPSSRLGRNKGFSRGPGAPASPSASHPQGLDTTPKPH.

Residues threonine 19–aspartate 317 enclose the F-BAR domain. A coiled-coil region spans residues leucine 128–arginine 195. A compositionally biased stretch (basic and acidic residues) spans glutamate 187 to alanine 196. 2 disordered regions span residues glutamate 187 to lysine 220 and leucine 402 to glutamate 435. Low complexity-rich tracts occupy residues threonine 202–glycine 211 and threonine 407–serine 419. The region spanning glycine 507–phenylalanine 695 is the Rho-GAP domain. The SH3 domain maps to glutamate 746 to glycine 805. 3 positions are modified to phosphoserine: serine 860, serine 901, and serine 906. The disordered stretch occupies residues lysine 885 to histidine 946. The segment covering serine 901 to proline 910 has biased composition (pro residues). Positions glycine 924–serine 934 are enriched in low complexity.

In terms of assembly, interacts with NCKAP1L. Predominantly in hematopoietic cells (spleen, thymus and leukocytes); low levels in placenta, lung and various fetal tissues.

Its subcellular location is the cytoplasm. Its function is as follows. Inhibitory effect on stress fiber organization. May down-regulate Rho-like GTPase in hematopoietic cells. In Homo sapiens (Human), this protein is Rho GTPase-activating protein 4.